The chain runs to 255 residues: Probable transcriptional regulatory protein PCC8801_2028 (255 aa).

Belongs to the TACO1 family.

Its subcellular location is the cytoplasm. This is Probable transcriptional regulatory protein PCC8801_2028 from Rippkaea orientalis (strain PCC 8801 / RF-1) (Cyanothece sp. (strain PCC 8801)).